We begin with the raw amino-acid sequence, 288 residues long: Light-independent protochlorophyllide reductase iron-sulfur ATP-binding protein (288 aa).

ATP-binding positions include 12–17 (GIGKST) and K41. Position 16 (S16) interacts with Mg(2+). Residues C97 and C131 each coordinate [4Fe-4S] cluster. 182–183 (NR) is a binding site for ATP.

The protein belongs to the NifH/BchL/ChlL family. Homodimer. Protochlorophyllide reductase is composed of three subunits; ChlL, ChlN and ChlB. [4Fe-4S] cluster is required as a cofactor.

The enzyme catalyses chlorophyllide a + oxidized 2[4Fe-4S]-[ferredoxin] + 2 ADP + 2 phosphate = protochlorophyllide a + reduced 2[4Fe-4S]-[ferredoxin] + 2 ATP + 2 H2O. It participates in porphyrin-containing compound metabolism; chlorophyll biosynthesis (light-independent). Its function is as follows. Component of the dark-operative protochlorophyllide reductase (DPOR) that uses Mg-ATP and reduced ferredoxin to reduce ring D of protochlorophyllide (Pchlide) to form chlorophyllide a (Chlide). This reaction is light-independent. The L component serves as a unique electron donor to the NB-component of the complex, and binds Mg-ATP. This Synechocystis sp. (strain ATCC 27184 / PCC 6803 / Kazusa) protein is Light-independent protochlorophyllide reductase iron-sulfur ATP-binding protein.